A 409-amino-acid polypeptide reads, in one-letter code: Arginine deiminase (409 aa).

Catalysis depends on Cys-399, which acts as the Amidino-cysteine intermediate.

This sequence belongs to the arginine deiminase family.

The protein localises to the cytoplasm. The catalysed reaction is L-arginine + H2O = L-citrulline + NH4(+). Its pathway is amino-acid degradation; L-arginine degradation via ADI pathway; carbamoyl phosphate from L-arginine: step 1/2. In Borrelia garinii subsp. bavariensis (strain ATCC BAA-2496 / DSM 23469 / PBi) (Borreliella bavariensis), this protein is Arginine deiminase.